The chain runs to 843 residues: MAKPLTDGERRKQISVRGLAGLGDVAEVRKSFNRHLHFTLVKDRNVATRRDYYLALAHTVRDHLVGRWIRTQQRYYERDPKRIYYLSLEFYMGRTLQNTMVNLGLQNACDEAIYQLGLDLEELEEIEEDAGLGNGGLGRLAACFLDSMATLGLAAYGYGIRYEFGIFNQKIVNGWQVEEADDWLRYGNPWEKARPEYMLPVHFYGRVEHSPEGVRWLDTQVVLAMPYDTPVPGYKNDTVNTMRLWSAKAPNDFKLHDFNVGGYIEAVLDRNLAENISRVLYPNDNFFEGKELRLKQEYFVVAATLQDIIRRFKSSKFGCRDPVRTSFETFPDKVAIQLNDTHPALAIPELMRILVDVEKVDWGKAWEITKKTCAYTNHTVLPEALERWPVSMFEKLLPRHLDIIYAINQRHLDHVAALFPGDVDRLRRMSVIEEGDCKRINMAHLCVIGSHAVNGVARIHSEIVRQSVFKDFYELEPEKFQNKTNGITPRRWLLLCNPGLAETIVERIGEDFLTDLSQLKKLLPLVGDEALIRDVAQVKQENKVKFSAFLEKQYGVKVNPSSMFDVHVKRIHEYKRQLLNCLHVVTLYNRIKKDPTQAFVPRTVMIGGKAAPGYHMAKKIIKLVTSIGDIVNHDPIVGDRLKVIFLENYRVSLAEKVIPAADLSQQISTAGTEASGTGNMKFMLNGALTIGTMDGANVEMAEEAGAENLFIFGLRVEDVEALDRKGYNAHEYYNHLPELQQAVDQINSGFFSPREPDCFKDVVNMLLNHDRFKVFADYEAYVACQAQVDQLYRNPKEWTKKVIRNIACSGKFSSDRTITEYARDIWGAEPPALQTPPPSLPRD.

A2 bears the N-acetylalanine mark. Position 15 is a phosphoserine; by PHK; in form phosphorylase A (S15). Residues D43, Y197, and R310 each coordinate AMP. Y197 bears the Phosphotyrosine mark. A Phosphotyrosine modification is found at Y473. K569 is a binding site for pyridoxal 5'-phosphate. The interval 677-678 (TG) is pyridoxal 5'-phosphate. N6-(pyridoxal phosphate)lysine is present on K681.

Belongs to the glycogen phosphorylase family. As to quaternary structure, homodimer. Dimers associate into a tetramer to form the enzymatically active phosphorylase A. Pyridoxal 5'-phosphate serves as cofactor. Phosphorylation of Ser-15 converts phosphorylase B (unphosphorylated) to phosphorylase A.

The enzyme catalyses [(1-&gt;4)-alpha-D-glucosyl](n) + phosphate = [(1-&gt;4)-alpha-D-glucosyl](n-1) + alpha-D-glucose 1-phosphate. With respect to regulation, activity of phosphorylase is controlled both by allosteric means (through the non-covalent binding of metabolites) and by covalent modification. Thus AMP allosterically activates, whereas ATP, ADP, and glucose-6-phosphate allosterically inhibit, phosphorylase B. Glycogen phosphorylase that regulates glycogen mobilization. Phosphorylase is an important allosteric enzyme in carbohydrate metabolism. Enzymes from different sources differ in their regulatory mechanisms and in their natural substrates. However, all known phosphorylases share catalytic and structural properties. This Ovis aries (Sheep) protein is Glycogen phosphorylase, brain form (PYGB).